The following is a 146-amino-acid chain: Cystatin-C (146 aa).

Positions 1-26 are cleaved as a signal peptide; sequence MAGPLRAPLLLLAILAVALALSPAAG. Ser-43 carries the post-translational modification Phosphoserine. The Secondary area of contact motif lies at 81–85; sequence QIVAG. Disulfide bonds link Cys-99-Cys-109 and Cys-123-Cys-143.

It belongs to the cystatin family.

It localises to the secreted. Its function is as follows. As an inhibitor of cysteine proteinases, this protein is thought to serve an important physiological role as a local regulator of this enzyme activity. The chain is Cystatin-C (CST3) from Saimiri sciureus (Common squirrel monkey).